The chain runs to 793 residues: Translocase of chloroplast 90, chloroplastic (793 aa).

Residues 22 to 59 (LGSDPFFRDPHQEQDNHSQAPAAPQPVTLSEPPCSTSS) are disordered. Positions 27–37 (FFRDPHQEQDN) are enriched in basic and acidic residues. Residues 130–157 (LIRAEESELKNVKLRQDRAKALAREQES) adopt a coiled-coil conformation. The region spanning 164 to 394 (DFSLRILVLG…FRDSIGLGQP (231 aa)) is the AIG1-type G domain. The segment at 173-180 (GKTGVGKS) is G1. Residues 176-181 (GVGKSA) and 195-200 (DAFRPG) contribute to the GTP site. Ser-180 is a binding site for Mg(2+). The tract at residues 195 to 198 (DAFR) is homodimerization. The G2 stretch occupies residues 199 to 203 (PGTDR). Residues 220-223 (DTPG) are G3. Positions 259-264 (RLDMID) are homodimerization. Residues 279–297 (IFGAAIWLNTILVMTHSAA) form a helical membrane-spanning segment. Positions 293–296 (THSA) are G4. GTP contacts are provided by residues His-294 and 341–342 (EN). The G5 stretch occupies residues 341–343 (ENH). Coiled-coil stretches lie at residues 410 to 442 (LRRR…YDQL) and 477 to 503 (KKQL…DTEQ).

This sequence belongs to the TRAFAC class TrmE-Era-EngA-EngB-Septin-like GTPase superfamily. AIG1/Toc34/Toc159-like paraseptin GTPase family. TOC159 subfamily. In terms of assembly, homodimer. Part of the TOC core complex that includes 1 protein for the specific recognition of transit peptides surrounded by a ring composed of four proteins forming translocation channels, and four to five GTP-binding proteins providing energy. This core complex can interact with components of the TIC complex to form a larger import complex. Chloroplastic protein precursor such as prSS (precursor of the RuBisCO small subunit) interacts with these complexes. The TOC complex contains a specific subset of polar lipids such as digalactosyldiacylglyceride (DGDG), phosphatidylcholine (PC) and phosphatidylglycerol (PG). Interacts with TOC33 and TOC75. Requires Mg(2+) as cofactor. As to expression, expressed in seedlings, leaves, flowers, and roots.

The protein localises to the plastid. It is found in the chloroplast outer membrane. Its subcellular location is the cytoplasm. Its function is as follows. GTPase involved in protein precursor import into chloroplasts. Seems to recognize chloroplast-destined precursor proteins and regulate their presentation to the translocation channel through GTP hydrolysis. Probably specialized in the import of nuclear encoded photosynthetic preproteins from the cytoplasm to the chloroplast. This chain is Translocase of chloroplast 90, chloroplastic (TOC90), found in Arabidopsis thaliana (Mouse-ear cress).